Consider the following 957-residue polypeptide: Glycine dehydrogenase (decarboxylating) (957 aa).

Position 708 is an N6-(pyridoxal phosphate)lysine (Lys-708).

The protein belongs to the GcvP family. In terms of assembly, the glycine cleavage system is composed of four proteins: P, T, L and H. Requires pyridoxal 5'-phosphate as cofactor.

It carries out the reaction N(6)-[(R)-lipoyl]-L-lysyl-[glycine-cleavage complex H protein] + glycine + H(+) = N(6)-[(R)-S(8)-aminomethyldihydrolipoyl]-L-lysyl-[glycine-cleavage complex H protein] + CO2. The glycine cleavage system catalyzes the degradation of glycine. The P protein binds the alpha-amino group of glycine through its pyridoxal phosphate cofactor; CO(2) is released and the remaining methylamine moiety is then transferred to the lipoamide cofactor of the H protein. This Escherichia fergusonii (strain ATCC 35469 / DSM 13698 / CCUG 18766 / IAM 14443 / JCM 21226 / LMG 7866 / NBRC 102419 / NCTC 12128 / CDC 0568-73) protein is Glycine dehydrogenase (decarboxylating).